A 494-amino-acid chain; its full sequence is Flap endonuclease 1 (494 aa).

The N-domain stretch occupies residues 1 to 106 (MGIKGLIPFL…KTLEKRRQQR (106 aa)). Asp34 is a Mg(2+) binding site. Arg47 and Arg72 together coordinate DNA. Asp88, Glu160, Glu162, Asp181, and Asp183 together coordinate Mg(2+). Positions 124–253 (SVKKLVGRTV…KTAYSLVKKY (130 aa)) are I-domain. DNA is bound at residue Glu160. DNA contacts are provided by Gly231 and Asp233. Asp233 contacts Mg(2+). Residues 330-338 (IQTSLLSFL) form an interaction with PCNA region. Disordered stretches follow at residues 341 to 382 (PQHN…ESST) and 395 to 426 (LFCE…ENET). Residues 408–426 (DRGRVDKNEDLFKKSENET) show a composition bias toward basic and acidic residues.

The protein belongs to the XPG/RAD2 endonuclease family. FEN1 subfamily. In terms of assembly, interacts with PCNA. Three molecules of FEN1 bind to one PCNA trimer with each molecule binding to one PCNA monomer. PCNA stimulates the nuclease activity without altering cleavage specificity. It depends on Mg(2+) as a cofactor. Post-translationally, phosphorylated. Phosphorylation upon DNA damage induces relocalization to the nuclear plasma.

The protein resides in the nucleus. It localises to the nucleolus. The protein localises to the nucleoplasm. Its subcellular location is the mitochondrion. Structure-specific nuclease with 5'-flap endonuclease and 5'-3' exonuclease activities involved in DNA replication and repair. During DNA replication, cleaves the 5'-overhanging flap structure that is generated by displacement synthesis when DNA polymerase encounters the 5'-end of a downstream Okazaki fragment. It enters the flap from the 5'-end and then tracks to cleave the flap base, leaving a nick for ligation. Also involved in the long patch base excision repair (LP-BER) pathway, by cleaving within the apurinic/apyrimidinic (AP) site-terminated flap. Acts as a genome stabilization factor that prevents flaps from equilibrating into structures that lead to duplications and deletions. Also possesses 5'-3' exonuclease activity on nicked or gapped double-stranded DNA, and exhibits RNase H activity. Also involved in replication and repair of rDNA and in repairing mitochondrial DNA. This is Flap endonuclease 1 from Theileria parva (East coast fever infection agent).